The chain runs to 415 residues: Squalene synthase 12 (415 aa).

2 helical membrane passes run 281 to 301 (AIFR…ALCF) and 391 to 411 (LIAI…SNLL).

This sequence belongs to the phytoene/squalene synthase family. It depends on Mg(2+) as a cofactor. Requires Mn(2+) as cofactor.

It localises to the endoplasmic reticulum membrane. It carries out the reaction 2 (2E,6E)-farnesyl diphosphate + NADH + H(+) = squalene + 2 diphosphate + NAD(+). The catalysed reaction is 2 (2E,6E)-farnesyl diphosphate + NADPH + H(+) = squalene + 2 diphosphate + NADP(+). The protein operates within terpene metabolism; lanosterol biosynthesis; lanosterol from farnesyl diphosphate: step 1/3. In terms of biological role, component of the triterpene saponins (e.g. ginsenosides or panaxosides) and phytosterols biosynthetic pathways. Catalyzes the biosynthesis of squalene. This Panax ginseng (Korean ginseng) protein is Squalene synthase 12.